The following is a 262-amino-acid chain: Glutamate racemase (262 aa).

Residues 5–6 and 37–38 contribute to the substrate site; these read DS and YG. Residue Cys69 is the Proton donor/acceptor of the active site. 70–71 contacts substrate; it reads NT. The Proton donor/acceptor role is filled by Cys181. Residue 182-183 participates in substrate binding; the sequence is TH.

This sequence belongs to the aspartate/glutamate racemases family.

It carries out the reaction L-glutamate = D-glutamate. The protein operates within cell wall biogenesis; peptidoglycan biosynthesis. In terms of biological role, provides the (R)-glutamate required for cell wall biosynthesis. This chain is Glutamate racemase, found in Buchnera aphidicola subsp. Acyrthosiphon pisum (strain APS) (Acyrthosiphon pisum symbiotic bacterium).